Here is a 523-residue protein sequence, read N- to C-terminus: FAD:protein FMN transferase (523 aa).

A run of 3 helical transmembrane segments spans residues 88 to 108, 118 to 138, and 169 to 189; these read LLAG…VALA, GGAA…LVLL, and GLAL…TAPA. Residues 277–279 and D336 each bind FAD; that span reads LFD. A339 serves as a coordination point for Mg(2+). Residues K342 and 423 to 425 each bind FAD; that span reads HII. Residues D450 and T454 each coordinate Mg(2+).

This sequence in the N-terminal section; belongs to the RseC family. In the C-terminal section; belongs to the ApbE family. The cofactor is Mg(2+).

Its subcellular location is the cell membrane. The catalysed reaction is L-threonyl-[protein] + FAD = FMN-L-threonyl-[protein] + AMP + H(+). In terms of biological role, flavin transferase that catalyzes the transfer of the FMN moiety of FAD and its covalent binding to the hydroxyl group of a threonine residue in a target flavoprotein. Is likely involved in the modification of RnfG and RnfD. Required for nitrogen fixation. This is FAD:protein FMN transferase from Rhodobacter capsulatus (Rhodopseudomonas capsulata).